The chain runs to 424 residues: MVKRTDGTESPILAEDGGDGHDKPRLRYGELVILGYNGYLPQGDRGRRRSKFVLHKRTEASGVKRSKHYIVQSPQTSKAILDANQHSISYTLSRNQAVIVEYKEDTETDMFQVGRSSESPIDFVVMDTLPGDKKDAKVMQSTISRFACRILVNRCEPAKARIFAAGFDSSRNIFLGEKATKWQDNVEIDGLTTNGVLIMHPKGSFCGGNAKCGLWRECSVGGDVFSLRESRSAQQKGQPIYDECNILQDGTLIDLCGATLLWRSAEGLQHSPTKHDLEKLIDAINAGRPQCPVGLNTLVIPRKVNIGDQVNQPYVYLNCGHVQGHHDWGQDENTGARRCPMCLELGPVVTLCMGLEPAFYVDVGAPTYAFNPCGHMATEKTVKYWANVEIPHGTNGFQAVCPFCATPLDGATGYIKLIFQDNLD.

The disordered stretch occupies residues 1–21 (MVKRTDGTESPILAEDGGDGH). S10 is modified (phosphoserine).

Belongs to the pellino family. As to quaternary structure, interacts with pll.

Its function is as follows. Scaffold protein involved in the Toll signaling pathway via its interaction with pelle/pll kinase. This is Protein pellino (Pli) from Drosophila melanogaster (Fruit fly).